Consider the following 585-residue polypeptide: UvrABC system protein C (585 aa).

Residues 15-90 form the GIY-YIG domain; it reads AEPGVYQFLE…IKRHQPRYNV (76 aa). The UVR domain maps to 198–233; it reads GILADPLRQEMQAAATAEEFERAANIRDRLAVIESF.

Belongs to the UvrC family. Interacts with UvrB in an incision complex.

The protein resides in the cytoplasm. Functionally, the UvrABC repair system catalyzes the recognition and processing of DNA lesions. UvrC both incises the 5' and 3' sides of the lesion. The N-terminal half is responsible for the 3' incision and the C-terminal half is responsible for the 5' incision. The polypeptide is UvrABC system protein C (Haloquadratum walsbyi (strain DSM 16790 / HBSQ001)).